A 466-amino-acid polypeptide reads, in one-letter code: Cysteine--tRNA ligase (466 aa).

Cys-28 serves as a coordination point for Zn(2+). The 'HIGH' region motif lies at 30–40 (PTVYNYIHIGN). Residues Cys-208, His-233, and Glu-237 each coordinate Zn(2+). Positions 265–269 (KMSKS) match the 'KMSKS' region motif. Position 268 (Lys-268) interacts with ATP.

This sequence belongs to the class-I aminoacyl-tRNA synthetase family. As to quaternary structure, monomer. Zn(2+) serves as cofactor.

The protein localises to the cytoplasm. It carries out the reaction tRNA(Cys) + L-cysteine + ATP = L-cysteinyl-tRNA(Cys) + AMP + diphosphate. The protein is Cysteine--tRNA ligase of Staphylococcus haemolyticus (strain JCSC1435).